The chain runs to 308 residues: HTH-type transcriptional activator AllS (308 aa).

The 58-residue stretch at 2-59 (FDPETLRTFISVAETGSFSKAAERLCKTTATTSYRIKLLEENTGVGLFFRTTRSVSLT) folds into the HTH lysR-type domain. Residues 19 to 38 (FSKAAERLCKTTATTSYRIK) constitute a DNA-binding region (H-T-H motif).

The protein belongs to the LysR transcriptional regulatory family.

Functionally, positive regulator essential for the expression of allD operon. Binds to the allD promoter. This chain is HTH-type transcriptional activator AllS (allS), found in Salmonella typhi.